The primary structure comprises 150 residues: Peptide methionine sulfoxide reductase MsrB (150 aa).

Residues 9–132 enclose the MsrB domain; the sequence is EAELKRTLTK…NSAALKFIPF (124 aa). C121 serves as the catalytic Nucleophile.

The protein belongs to the MsrB Met sulfoxide reductase family.

The enzyme catalyses L-methionyl-[protein] + [thioredoxin]-disulfide + H2O = L-methionyl-(R)-S-oxide-[protein] + [thioredoxin]-dithiol. This Mycoplasma genitalium (strain ATCC 33530 / DSM 19775 / NCTC 10195 / G37) (Mycoplasmoides genitalium) protein is Peptide methionine sulfoxide reductase MsrB.